The chain runs to 98 residues: NADH-ubiquinone oxidoreductase chain 4L (98 aa).

3 helical membrane passes run 1–21 (MSLT…GLLM), 29–49 (SLLC…ITIL), and 61–81 (IILL…LVMV).

The protein belongs to the complex I subunit 4L family. Core subunit of respiratory chain NADH dehydrogenase (Complex I) which is composed of 45 different subunits.

It is found in the mitochondrion inner membrane. The catalysed reaction is a ubiquinone + NADH + 5 H(+)(in) = a ubiquinol + NAD(+) + 4 H(+)(out). Its function is as follows. Core subunit of the mitochondrial membrane respiratory chain NADH dehydrogenase (Complex I) which catalyzes electron transfer from NADH through the respiratory chain, using ubiquinone as an electron acceptor. Part of the enzyme membrane arm which is embedded in the lipid bilayer and involved in proton translocation. The chain is NADH-ubiquinone oxidoreductase chain 4L (MT-ND4L) from Ectophylla alba (White bat).